Reading from the N-terminus, the 354-residue chain is Holliday junction branch migration complex subunit RuvB (354 aa).

Residues 5 to 197 (TDDFSAADLP…FGIVARLEFY (193 aa)) form a large ATPase domain (RuvB-L) region. Residues Leu-36, Arg-37, Gly-78, Lys-81, Thr-82, Thr-83, 144–146 (EDY), Arg-187, Tyr-197, and Arg-234 each bind ATP. Residue Thr-82 participates in Mg(2+) binding. Residues 198-268 (TAEELGRIVR…IANKALAMLD (71 aa)) are small ATPAse domain (RuvB-S). The head domain (RuvB-H) stretch occupies residues 271–354 (PQGFDVMDRK…PPVSGNDMFT (84 aa)). The DNA site is built by Arg-307, Arg-326, and Arg-331.

Belongs to the RuvB family. As to quaternary structure, homohexamer. Forms an RuvA(8)-RuvB(12)-Holliday junction (HJ) complex. HJ DNA is sandwiched between 2 RuvA tetramers; dsDNA enters through RuvA and exits via RuvB. An RuvB hexamer assembles on each DNA strand where it exits the tetramer. Each RuvB hexamer is contacted by two RuvA subunits (via domain III) on 2 adjacent RuvB subunits; this complex drives branch migration. In the full resolvosome a probable DNA-RuvA(4)-RuvB(12)-RuvC(2) complex forms which resolves the HJ.

Its subcellular location is the cytoplasm. It catalyses the reaction ATP + H2O = ADP + phosphate + H(+). Functionally, the RuvA-RuvB-RuvC complex processes Holliday junction (HJ) DNA during genetic recombination and DNA repair, while the RuvA-RuvB complex plays an important role in the rescue of blocked DNA replication forks via replication fork reversal (RFR). RuvA specifically binds to HJ cruciform DNA, conferring on it an open structure. The RuvB hexamer acts as an ATP-dependent pump, pulling dsDNA into and through the RuvAB complex. RuvB forms 2 homohexamers on either side of HJ DNA bound by 1 or 2 RuvA tetramers; 4 subunits per hexamer contact DNA at a time. Coordinated motions by a converter formed by DNA-disengaged RuvB subunits stimulates ATP hydrolysis and nucleotide exchange. Immobilization of the converter enables RuvB to convert the ATP-contained energy into a lever motion, pulling 2 nucleotides of DNA out of the RuvA tetramer per ATP hydrolyzed, thus driving DNA branch migration. The RuvB motors rotate together with the DNA substrate, which together with the progressing nucleotide cycle form the mechanistic basis for DNA recombination by continuous HJ branch migration. Branch migration allows RuvC to scan DNA until it finds its consensus sequence, where it cleaves and resolves cruciform DNA. The protein is Holliday junction branch migration complex subunit RuvB of Polaromonas sp. (strain JS666 / ATCC BAA-500).